Reading from the N-terminus, the 142-residue chain is Large ribosomal subunit protein uL13 (142 aa).

This sequence belongs to the universal ribosomal protein uL13 family. As to quaternary structure, part of the 50S ribosomal subunit.

Functionally, this protein is one of the early assembly proteins of the 50S ribosomal subunit, although it is not seen to bind rRNA by itself. It is important during the early stages of 50S assembly. In Photorhabdus laumondii subsp. laumondii (strain DSM 15139 / CIP 105565 / TT01) (Photorhabdus luminescens subsp. laumondii), this protein is Large ribosomal subunit protein uL13.